The primary structure comprises 224 residues: Ribose-5-phosphate isomerase A (224 aa).

Residues 32 to 35 (TGST), 85 to 88 (DGAD), and 98 to 101 (KGGG) contribute to the substrate site. The active-site Proton acceptor is the E107. K125 is a binding site for substrate.

Belongs to the ribose 5-phosphate isomerase family. As to quaternary structure, homodimer.

It carries out the reaction aldehydo-D-ribose 5-phosphate = D-ribulose 5-phosphate. It participates in carbohydrate degradation; pentose phosphate pathway; D-ribose 5-phosphate from D-ribulose 5-phosphate (non-oxidative stage): step 1/1. Catalyzes the reversible conversion of ribose-5-phosphate to ribulose 5-phosphate. This Pseudomonas fluorescens (strain Pf0-1) protein is Ribose-5-phosphate isomerase A.